Reading from the N-terminus, the 630-residue chain is tRNA uridine 5-carboxymethylaminomethyl modification enzyme MnmG (630 aa).

13 to 18 (GGGHAG) serves as a coordination point for FAD. Residue 273–287 (GPRYCPSIEDKVNRF) participates in NAD(+) binding.

The protein belongs to the MnmG family. Homodimer. Heterotetramer of two MnmE and two MnmG subunits. Requires FAD as cofactor.

The protein localises to the cytoplasm. NAD-binding protein involved in the addition of a carboxymethylaminomethyl (cmnm) group at the wobble position (U34) of certain tRNAs, forming tRNA-cmnm(5)s(2)U34. The chain is tRNA uridine 5-carboxymethylaminomethyl modification enzyme MnmG from Saccharophagus degradans (strain 2-40 / ATCC 43961 / DSM 17024).